Reading from the N-terminus, the 211-residue chain is Redox-sensing transcriptional repressor Rex (211 aa).

The segment at residues 17 to 56 (LYYRFVSILKGKGIDRVNSKTISEALQIDSATIRRDFSYF) is a DNA-binding region (H-T-H motif). Residue 91 to 96 (GIGNLG) participates in NAD(+) binding.

Belongs to the transcriptional regulatory Rex family. In terms of assembly, homodimer.

The protein resides in the cytoplasm. Modulates transcription in response to changes in cellular NADH/NAD(+) redox state. This Staphylococcus epidermidis (strain ATCC 35984 / DSM 28319 / BCRC 17069 / CCUG 31568 / BM 3577 / RP62A) protein is Redox-sensing transcriptional repressor Rex.